The primary structure comprises 354 residues: S-adenosylmethionine:tRNA ribosyltransferase-isomerase (354 aa).

It belongs to the QueA family. As to quaternary structure, monomer.

Its subcellular location is the cytoplasm. The enzyme catalyses 7-aminomethyl-7-carbaguanosine(34) in tRNA + S-adenosyl-L-methionine = epoxyqueuosine(34) in tRNA + adenine + L-methionine + 2 H(+). It participates in tRNA modification; tRNA-queuosine biosynthesis. Transfers and isomerizes the ribose moiety from AdoMet to the 7-aminomethyl group of 7-deazaguanine (preQ1-tRNA) to give epoxyqueuosine (oQ-tRNA). The polypeptide is S-adenosylmethionine:tRNA ribosyltransferase-isomerase (Salmonella typhi).